The sequence spans 130 residues: Small ribosomal subunit protein uS11 (130 aa).

The protein belongs to the universal ribosomal protein uS11 family. Part of the 30S ribosomal subunit. Interacts with proteins S7 and S18. Binds to IF-3.

Its function is as follows. Located on the platform of the 30S subunit, it bridges several disparate RNA helices of the 16S rRNA. Forms part of the Shine-Dalgarno cleft in the 70S ribosome. This Microcystis aeruginosa (strain NIES-843 / IAM M-2473) protein is Small ribosomal subunit protein uS11.